An 843-amino-acid polypeptide reads, in one-letter code: Translation initiation factor IF-2 (843 aa).

2 disordered regions span residues 55 to 185 and 209 to 228; these read AEAV…EDRD and KVEEEQKPKEPQKKNKQVKV. Basic and acidic residues predominate over residues 62 to 106; sequence PQEKPKKSAPKKEEKPKEEVKKEAEEKVAASKKEEEKPQEKKSVE. Residues 114-128 show a composition bias toward basic residues; that stretch reads LKKRRGLVIVKKKRP. The segment covering 129-141 has biased composition (basic and acidic residues); that stretch reads KVEPKVEEKEAKQ. Over residues 156 to 165 the composition is skewed to basic residues; that stretch reads LKRKPKKAKK. Composition is skewed to basic and acidic residues over residues 171 to 185 and 209 to 221; these read KKNEGKKIEILEDRD and KVEEEQKPKEPQK. In terms of domain architecture, tr-type G spans 342-511; the sequence is ERPPVITIMG…LLQAEIMELK (170 aa). Positions 351-358 are G1; the sequence is GHVDHGKT. 351 to 358 provides a ligand contact to GTP; the sequence is GHVDHGKT. Positions 376–380 are G2; it reads GITQH. The interval 397–400 is G3; that stretch reads DTPG. Residues 397-401 and 451-454 contribute to the GTP site; these read DTPGH and NKID. The tract at residues 451–454 is G4; the sequence is NKID. Positions 487–489 are G5; it reads SAK.

It belongs to the TRAFAC class translation factor GTPase superfamily. Classic translation factor GTPase family. IF-2 subfamily.

The protein resides in the cytoplasm. One of the essential components for the initiation of protein synthesis. Protects formylmethionyl-tRNA from spontaneous hydrolysis and promotes its binding to the 30S ribosomal subunits. Also involved in the hydrolysis of GTP during the formation of the 70S ribosomal complex. The sequence is that of Translation initiation factor IF-2 from Nitratiruptor sp. (strain SB155-2).